Here is a 279-residue protein sequence, read N- to C-terminus: Diaminopimelate epimerase (279 aa).

Residues N14 and Q68 each coordinate substrate. Catalysis depends on C77, which acts as the Proton donor. Residues 78 to 79 (GN), N191, and 207 to 208 (ER) each bind substrate. Residue C217 is the Proton acceptor of the active site. 218–219 (GT) contributes to the substrate binding site.

It belongs to the diaminopimelate epimerase family. Homodimer.

It localises to the cytoplasm. The catalysed reaction is (2S,6S)-2,6-diaminopimelate = meso-2,6-diaminopimelate. The protein operates within amino-acid biosynthesis; L-lysine biosynthesis via DAP pathway; DL-2,6-diaminopimelate from LL-2,6-diaminopimelate: step 1/1. Its function is as follows. Catalyzes the stereoinversion of LL-2,6-diaminopimelate (L,L-DAP) to meso-diaminopimelate (meso-DAP), a precursor of L-lysine. The polypeptide is Diaminopimelate epimerase (Methanothrix thermoacetophila (strain DSM 6194 / JCM 14653 / NBRC 101360 / PT) (Methanosaeta thermophila)).